A 246-amino-acid chain; its full sequence is Uridylate kinase (246 aa).

Position 18–21 (18–21) interacts with ATP; sequence KVSG. A UMP-binding site is contributed by Gly-60. The ATP site is built by Gly-61 and Arg-65. Residues Asp-80 and 141–148 each bind UMP; that span reads TGNPFFTT. Residues Thr-168, Gln-169, Tyr-174, and Asp-177 each contribute to the ATP site.

This sequence belongs to the UMP kinase family. As to quaternary structure, homohexamer.

The protein localises to the cytoplasm. It carries out the reaction UMP + ATP = UDP + ADP. It participates in pyrimidine metabolism; CTP biosynthesis via de novo pathway; UDP from UMP (UMPK route): step 1/1. With respect to regulation, inhibited by UTP. Its function is as follows. Catalyzes the reversible phosphorylation of UMP to UDP. This is Uridylate kinase from Gluconobacter oxydans (strain 621H) (Gluconobacter suboxydans).